The primary structure comprises 358 residues: sn-glycerol-3-phosphate import ATP-binding protein UgpC (358 aa).

The ABC transporter domain occupies 4–235; sequence VELKQVRKTY…PATLFVASFI (232 aa). 37 to 44 is a binding site for ATP; it reads GPSGCGKS.

Belongs to the ABC transporter superfamily. sn-glycerol-3-phosphate importer (TC 3.A.1.1.3) family. The complex is composed of two ATP-binding proteins (UgpC), two transmembrane proteins (UgpA and UgpE) and a solute-binding protein (UgpB).

Its subcellular location is the cell inner membrane. The enzyme catalyses sn-glycerol 3-phosphate(out) + ATP + H2O = sn-glycerol 3-phosphate(in) + ADP + phosphate + H(+). Its function is as follows. Part of the ABC transporter complex UgpBAEC involved in sn-glycerol-3-phosphate (G3P) import. Responsible for energy coupling to the transport system. This Roseobacter denitrificans (strain ATCC 33942 / OCh 114) (Erythrobacter sp. (strain OCh 114)) protein is sn-glycerol-3-phosphate import ATP-binding protein UgpC.